The primary structure comprises 196 residues: Guanylate kinase (196 aa).

The Guanylate kinase-like domain occupies Gly8–Ala191. Gly15–Gly22 is a binding site for ATP.

This sequence belongs to the guanylate kinase family.

Its subcellular location is the cytoplasm. It catalyses the reaction GMP + ATP = GDP + ADP. Functionally, essential for recycling GMP and indirectly, cGMP. In Bifidobacterium longum (strain NCC 2705), this protein is Guanylate kinase.